Here is a 323-residue protein sequence, read N- to C-terminus: Beta-ketoacyl-[acyl-carrier-protein] synthase III (323 aa).

Active-site residues include Cys114 and His250. Residues 251 to 255 form an ACP-binding region; that stretch reads QANIR. Asn280 is an active-site residue.

Belongs to the thiolase-like superfamily. FabH family. Homodimer.

It localises to the cytoplasm. It carries out the reaction malonyl-[ACP] + acetyl-CoA + H(+) = 3-oxobutanoyl-[ACP] + CO2 + CoA. The protein operates within lipid metabolism; fatty acid biosynthesis. Functionally, catalyzes the condensation reaction of fatty acid synthesis by the addition to an acyl acceptor of two carbons from malonyl-ACP. Catalyzes the first condensation reaction which initiates fatty acid synthesis and may therefore play a role in governing the total rate of fatty acid production. Possesses both acetoacetyl-ACP synthase and acetyl transacylase activities. Its substrate specificity determines the biosynthesis of branched-chain and/or straight-chain of fatty acids. The chain is Beta-ketoacyl-[acyl-carrier-protein] synthase III from Roseobacter denitrificans (strain ATCC 33942 / OCh 114) (Erythrobacter sp. (strain OCh 114)).